A 32-amino-acid polypeptide reads, in one-letter code: Kappa-theraphotoxin-Gr2b (32 aa).

Cystine bridges form between cysteine 2/cysteine 16, cysteine 9/cysteine 21, and cysteine 15/cysteine 25.

Belongs to the neurotoxin 30 (phrixotoxin) family. As to expression, expressed by the venom gland.

The protein localises to the secreted. In terms of biological role, binds the voltage-sensor domain of the potassium channel KvAP (from the archaeon Aeropyrum pernix) and affects channel gating. The protein is Kappa-theraphotoxin-Gr2b of Grammostola rosea (Chilean rose tarantula).